The sequence spans 557 residues: Formate--tetrahydrofolate ligase (557 aa).

67–74 (TPAGEGKT) lines the ATP pocket.

This sequence belongs to the formate--tetrahydrofolate ligase family.

The enzyme catalyses (6S)-5,6,7,8-tetrahydrofolate + formate + ATP = (6R)-10-formyltetrahydrofolate + ADP + phosphate. It participates in one-carbon metabolism; tetrahydrofolate interconversion. This chain is Formate--tetrahydrofolate ligase, found in Cereibacter sphaeroides (strain ATCC 17025 / ATH 2.4.3) (Rhodobacter sphaeroides).